The primary structure comprises 239 residues: tRNA (guanine-N(7)-)-methyltransferase (239 aa).

Residues glutamate 69, glutamate 94, aspartate 121, and aspartate 144 each coordinate S-adenosyl-L-methionine. The active site involves aspartate 144. Lysine 148 serves as a coordination point for substrate. Residues 150–155 form an interaction with RNA region; sequence RHNKRR. Substrate-binding positions include aspartate 180 and 217–220; that span reads TKFE.

This sequence belongs to the class I-like SAM-binding methyltransferase superfamily. TrmB family. As to quaternary structure, monomer.

The catalysed reaction is guanosine(46) in tRNA + S-adenosyl-L-methionine = N(7)-methylguanosine(46) in tRNA + S-adenosyl-L-homocysteine. It functions in the pathway tRNA modification; N(7)-methylguanine-tRNA biosynthesis. Its function is as follows. Catalyzes the formation of N(7)-methylguanine at position 46 (m7G46) in tRNA. This chain is tRNA (guanine-N(7)-)-methyltransferase, found in Yersinia pseudotuberculosis serotype O:1b (strain IP 31758).